The following is a 627-amino-acid chain: Muscarinic acetylcholine receptor gar-2 (627 aa).

The Extracellular portion of the chain corresponds to 1–9; that stretch reads MAVASVLLA. The chain crosses the membrane as a helical span at residues 10-30; the sequence is LFMLFLSIVTVIGNLAVLLSY. At 31-41 the chain is on the cytoplasmic side; that stretch reads YLDKNIRQPTN. The helical transmembrane segment at 42-62 threads the bilayer; the sequence is YFIFSLAISDLLIGLEGIPVY. Residues 63–81 lie on the Extracellular side of the membrane; that stretch reads TAFYLNNNEWIWGDVLCDL. A disulfide bridge links Cys79 with Cys160. The chain crosses the membrane as a helical span at residues 82 to 102; it reads WLSIDYIVCLASIYTVLGITV. The Cytoplasmic portion of the chain corresponds to 103–122; that stretch reads DRYYSVKKPATYRNWRTPGR. Residues 123–143 traverse the membrane as a helical segment; that stretch reads VVLIIIFIWLVPSILFSVSIF. The Extracellular segment spans residues 144–172; the sequence is GYGTFTGTGRILKETECYVQFMTNPYLNM. A helical membrane pass occupies residues 173-193; it reads GMYISYYWTTLFVMLYLYWGI. The Cytoplasmic portion of the chain corresponds to 194 to 549; the sequence is YRAAKKLALK…ENRARKALRT (356 aa). Disordered regions lie at residues 222–266, 423–442, and 449–475; these read VSVR…VGTP, REDE…ENGG, and ANDE…HDPN. The span at 231 to 264 shows a compositional bias: low complexity; the sequence is NSSSDSPNDTSNSSKCFRTAPPTTTVQTTQTNVG. The segment covering 459–475 has biased composition (basic and acidic residues); sequence KESEQKEEMTPENHDPN. The helical transmembrane segment at 550-570 threads the bilayer; it reads ITFILGSFIILWTPFYVLATI. Residues 571–586 are Extracellular-facing; it reads YGFCETCKASPSFNTL. The helical transmembrane segment at 587–609 threads the bilayer; it reads YTISYYLCYMNSPLNPFCYAMAN. The Cytoplasmic portion of the chain corresponds to 610-627; that stretch reads QQFKKTLTRIFKGDFRRV.

Belongs to the G-protein coupled receptor 1 family. Muscarinic acetylcholine receptor subfamily. As to expression, expressed in putative sensory neurons, many cells of the ventral cord and in the HSN motor neurons. Expressed in some cholinergic motor neurons and GABAergic motor neurons, which are the two major types of ventral cord motor neurons.

Its subcellular location is the cell membrane. It localises to the cell projection. It is found in the axon. The muscarinic acetylcholine receptor mediates various cellular responses, including inhibition of adenylate cyclase, breakdown of phosphoinositides and modulation of potassium channels through the action of G proteins. Primary transducing effect is Pi turnover. Regulates the activity of ventral cord motor neurons. Couples to the G(o)-alpha G-protein subunit goa-1 to negatively regulate cholinergic receptor activity in the presence of high levels of the neurotransmitter acetylcholine in ventral cord motor neurons. As acetylcholine depolarizes body wall muscles, modulation of acetylcholine levels most likely results in the control locomotory behavior and egg-laying. The polypeptide is Muscarinic acetylcholine receptor gar-2 (Caenorhabditis elegans).